We begin with the raw amino-acid sequence, 366 residues long: Histidinol-phosphate aminotransferase (366 aa).

Lys-228 is modified (N6-(pyridoxal phosphate)lysine).

It belongs to the class-II pyridoxal-phosphate-dependent aminotransferase family. Histidinol-phosphate aminotransferase subfamily. As to quaternary structure, homodimer. It depends on pyridoxal 5'-phosphate as a cofactor.

The enzyme catalyses L-histidinol phosphate + 2-oxoglutarate = 3-(imidazol-4-yl)-2-oxopropyl phosphate + L-glutamate. The protein operates within amino-acid biosynthesis; L-histidine biosynthesis; L-histidine from 5-phospho-alpha-D-ribose 1-diphosphate: step 7/9. In Corynebacterium glutamicum (strain ATCC 13032 / DSM 20300 / JCM 1318 / BCRC 11384 / CCUG 27702 / LMG 3730 / NBRC 12168 / NCIMB 10025 / NRRL B-2784 / 534), this protein is Histidinol-phosphate aminotransferase.